The primary structure comprises 359 residues: Src kinase-associated phosphoprotein 2 (359 aa).

Phosphoserine is present on residues S5, S6, and S9. The interval 14–64 (PEEIRNLLADVETFVADILKGENLSKKAKEKRESLIKKIKDVKSIYLQEFQ) is homodimerization. Positions 66 to 88 (KGDAEDGEEYDDPFAGPPDTISL) are disordered. The residue at position 75 (Y75) is a Phosphotyrosine. S87 and S90 each carry phosphoserine. Positions 116–219 (FVLKAGYLEK…WVQQLKFVLQ (104 aa)) constitute a PH domain. Residues Y151 and Y197 each carry the phosphotyrosine modification. The residue at position 223 (S223) is a Phosphoserine. Y261 bears the Phosphotyrosine mark. Residues 264–293 (LPEEEEDSAPVKVEEQRKMSQDSVHHTSGD) form a disordered region. Residues 275-293 (KVEEQRKMSQDSVHHTSGD) show a composition bias toward basic and acidic residues. Residues S283 and S286 each carry the phosphoserine modification. In terms of domain architecture, SH3 spans 297–358 (DYANFYQGLW…PKAYIMEMYD (62 aa)).

This sequence belongs to the SKAP family. As to quaternary structure, homodimer. Interacts with PTPNS1. Part of a complex consisting of SKAP2, FYB1 and PTPNS1. Part of a complex consisting of SKAP2, FYB1 and LILRB3. May interact with actin. Interacts with FYB1, which is required for SKAP2 protein stability. Interacts with LAT, GRB2, PTK2B and PRAM1. May interact with FYN, HCK and LYN. Interacts with FASLG. Post-translationally, phosphorylated in resting platelets. Phosphorylated by FYN on Tyr-261 upon T-cell activation. Dephosphorylated on Tyr-75 by PTPN22. Ubiquitously expressed. Present in platelets (at protein level).

It localises to the cytoplasm. May be involved in B-cell and macrophage adhesion processes. In B-cells, may act by coupling the B-cell receptor (BCR) to integrin activation. May play a role in src signaling pathway. This is Src kinase-associated phosphoprotein 2 (SKAP2) from Homo sapiens (Human).